Reading from the N-terminus, the 179-residue chain is Inner membrane-spanning protein YciB (179 aa).

5 helical membrane passes run 22-42 (IYAA…YSWV), 50-70 (MALI…FFHN), 76-96 (WKVT…QWVM), 121-141 (LAWA…AFWL), and 149-169 (FKVF…GVYI).

This sequence belongs to the YciB family.

Its subcellular location is the cell inner membrane. In terms of biological role, plays a role in cell envelope biogenesis, maintenance of cell envelope integrity and membrane homeostasis. In Escherichia fergusonii (strain ATCC 35469 / DSM 13698 / CCUG 18766 / IAM 14443 / JCM 21226 / LMG 7866 / NBRC 102419 / NCTC 12128 / CDC 0568-73), this protein is Inner membrane-spanning protein YciB.